A 1360-amino-acid chain; its full sequence is DNA-directed RNA polymerase subunit beta (1360 aa).

It belongs to the RNA polymerase beta chain family. In terms of assembly, the RNAP catalytic core consists of 2 alpha, 1 beta, 1 beta' and 1 omega subunit. When a sigma factor is associated with the core the holoenzyme is formed, which can initiate transcription.

It carries out the reaction RNA(n) + a ribonucleoside 5'-triphosphate = RNA(n+1) + diphosphate. Its function is as follows. DNA-dependent RNA polymerase catalyzes the transcription of DNA into RNA using the four ribonucleoside triphosphates as substrates. The polypeptide is DNA-directed RNA polymerase subunit beta (Vesicomyosocius okutanii subsp. Calyptogena okutanii (strain HA)).